We begin with the raw amino-acid sequence, 466 residues long: Glutamate decarboxylase alpha (466 aa).

Substrate-binding residues include Thr62 and Asn83. Pyridoxal 5'-phosphate-binding positions include 126–127, Thr212, and His275; that span reads SS. An N6-(pyridoxal phosphate)lysine modification is found at Lys276.

It belongs to the group II decarboxylase family. Homohexamer. Requires pyridoxal 5'-phosphate as cofactor.

It catalyses the reaction L-glutamate + H(+) = 4-aminobutanoate + CO2. Converts glutamate to gamma-aminobutyrate (GABA), consuming one intracellular proton in the reaction. The gad system helps to maintain a near-neutral intracellular pH when cells are exposed to extremely acidic conditions. The ability to survive transit through the acidic conditions of the stomach is essential for successful colonization of the mammalian host by commensal and pathogenic bacteria. The chain is Glutamate decarboxylase alpha (gadA) from Escherichia coli O6:H1 (strain CFT073 / ATCC 700928 / UPEC).